The following is a 570-amino-acid chain: Proline--tRNA ligase (570 aa).

Belongs to the class-II aminoacyl-tRNA synthetase family. ProS type 1 subfamily. As to quaternary structure, homodimer.

The protein localises to the cytoplasm. The enzyme catalyses tRNA(Pro) + L-proline + ATP = L-prolyl-tRNA(Pro) + AMP + diphosphate. Catalyzes the attachment of proline to tRNA(Pro) in a two-step reaction: proline is first activated by ATP to form Pro-AMP and then transferred to the acceptor end of tRNA(Pro). As ProRS can inadvertently accommodate and process non-cognate amino acids such as alanine and cysteine, to avoid such errors it has two additional distinct editing activities against alanine. One activity is designated as 'pretransfer' editing and involves the tRNA(Pro)-independent hydrolysis of activated Ala-AMP. The other activity is designated 'posttransfer' editing and involves deacylation of mischarged Ala-tRNA(Pro). The misacylated Cys-tRNA(Pro) is not edited by ProRS. The protein is Proline--tRNA ligase of Shewanella sp. (strain ANA-3).